We begin with the raw amino-acid sequence, 859 residues long: MTAIDPQSLEKHTPMMRQYLTLKAQHPDMLLFYRMGDFYELFYEDAKKASELLGISLTARGKSGGDPIPMAGLPYHAVEGYLAKLVQLRVSVAICEQVGDPATSKGPVERKVVRIVTPGTLTDEALLQERQDNLLAALYQGKTGYGYATLDVASGRFVVTELANTEALEAELQRTNPAELLYSEDFSQMSLIAGMNGTRRRPEWEFDYDTCQRMLLNQFGTKDLKGFGIEDARLSLQAAGCLMQYVKDTQRTALPHINSIVRFNQSDSIVLDAATRRNLELTVNLQGGRENTLASVLDNTVTPMGSRMLQRWIHQPLRDHDIIRARQASIAELMMTGDFETLSEDLKALGDVERITARIALRNARPRDFARLRQALTLLPQLQQTLSAASAPHLKYLSQVIGVFPEEVDLLSRAVVDNPPMLIRDGGVIREGYNEELDQWRKLSEGATDYLHELEAREKEQTGISTLKVGYNRVHGYYIEVSRRESDLVPLSYQRRQTLKNTERYIIPELKEHEEKVLSSQGRALALEKQLWEQLFDLILPKLHELQDFAQASAELDVLCNFAERAESLNYHCPELSSISGIHIEAGRHPVVEQVSQSPFIANPVTLNAQRKMLIVTGPNMGGKSTYMRQVALITLMAHIGCYVPAEQAVIGPVDRIFTRIGASDDLASGRSTFMVEMTETANILHNATPNSLVLMDEIGRGTSTYDGLSLAWSAAEYLAKQLQAMTLFATHYFELTQLPEQLSNVENVHLDAVEHGDSIVFMHAVQEGAASRSYGLQVAALAGVPNCVISAAKHKLHQLESRDHDVQQNTEQQGTQQNMSFVPSAPSPAVEALQKLNPDELTPRQALDYLYNLKKLAL.

618–625 is an ATP binding site; it reads GPNMGGKS. The tract at residues 803–829 is disordered; sequence RDHDVQQNTEQQGTQQNMSFVPSAPSP. Residues 808-819 are compositionally biased toward low complexity; the sequence is QQNTEQQGTQQN.

The protein belongs to the DNA mismatch repair MutS family.

Its function is as follows. This protein is involved in the repair of mismatches in DNA. It is possible that it carries out the mismatch recognition step. This protein has a weak ATPase activity. The polypeptide is DNA mismatch repair protein MutS (Shewanella pealeana (strain ATCC 700345 / ANG-SQ1)).